The primary structure comprises 236 residues: ATP synthase subunit a (236 aa).

A run of 5 helical transmembrane segments spans residues 18-38, 80-100, 112-132, 179-199, and 200-220; these read SNLLMVTVASVIVFLIAVLCT, VTLLMYIFVSNMLGLPFAIVI, DPAITLTLAVMVVVLSHYYGI, ILLSLLAGLATTGFLGTIGAA, and IPMLLWQGFSIFVGAIQAFIF.

The protein belongs to the ATPase A chain family. As to quaternary structure, F-type ATPases have 2 components, CF(1) - the catalytic core - and CF(0) - the membrane proton channel. CF(1) has five subunits: alpha(3), beta(3), gamma(1), delta(1), epsilon(1). CF(0) has three main subunits: a(1), b(2) and c(9-12). The alpha and beta chains form an alternating ring which encloses part of the gamma chain. CF(1) is attached to CF(0) by a central stalk formed by the gamma and epsilon chains, while a peripheral stalk is formed by the delta and b chains.

Its subcellular location is the cell membrane. Key component of the proton channel; it plays a direct role in the translocation of protons across the membrane. The chain is ATP synthase subunit a from Priestia megaterium (strain ATCC 12872 / QMB1551) (Bacillus megaterium).